The sequence spans 562 residues: Probable Xaa-Pro aminopeptidase PEPP (562 aa).

4 residues coordinate Mn(2+): D358, D369, E492, and E532.

Belongs to the peptidase M24B family. Requires Mn(2+) as cofactor.

The enzyme catalyses Release of any N-terminal amino acid, including proline, that is linked to proline, even from a dipeptide or tripeptide.. In terms of biological role, catalyzes the removal of a penultimate prolyl residue from the N-termini of peptides. This is Probable Xaa-Pro aminopeptidase PEPP (PEPP) from Leptosphaeria maculans (strain JN3 / isolate v23.1.3 / race Av1-4-5-6-7-8) (Blackleg fungus).